The sequence spans 465 residues: UDP-N-acetylmuramoylalanine--D-glutamate ligase (465 aa).

ATP is bound at residue 127–133; sequence GSNGKST.

Belongs to the MurCDEF family.

It localises to the cytoplasm. The catalysed reaction is UDP-N-acetyl-alpha-D-muramoyl-L-alanine + D-glutamate + ATP = UDP-N-acetyl-alpha-D-muramoyl-L-alanyl-D-glutamate + ADP + phosphate + H(+). It participates in cell wall biogenesis; peptidoglycan biosynthesis. Cell wall formation. Catalyzes the addition of glutamate to the nucleotide precursor UDP-N-acetylmuramoyl-L-alanine (UMA). In Cereibacter sphaeroides (strain ATCC 17023 / DSM 158 / JCM 6121 / CCUG 31486 / LMG 2827 / NBRC 12203 / NCIMB 8253 / ATH 2.4.1.) (Rhodobacter sphaeroides), this protein is UDP-N-acetylmuramoylalanine--D-glutamate ligase.